The sequence spans 122 residues: Large ribosomal subunit protein uL14c (122 aa).

The protein belongs to the universal ribosomal protein uL14 family. As to quaternary structure, part of the 50S ribosomal subunit.

The protein localises to the plastid. Its subcellular location is the chloroplast. Its function is as follows. Binds to 23S rRNA. This Daucus carota (Wild carrot) protein is Large ribosomal subunit protein uL14c.